The primary structure comprises 357 residues: MGGEVSNKTWVFKQSPSGLPEPGVHTAFEDRPLSLVAPPGGLVINLLTAGLDPHQRDRMRGAGNVDYVPGYEVNEPITNFSIAKVIRSDNAAFEEGSLIAGSLPIAEYGIIPKELIDARAMASPLVWKVSNDYNLDVKHYVGTLGLAGMTAWNSFYGLVKPVKGETIWVNAASSSVGEVVVQLAKIEGMKVIASVSSDDKLDYVVNELGADVGFNYRKEPVGKALKRLAPDGLDVVFENVGGDHFQAAIENMKWFGRIISCGTASQYNKPVEEQYGVTNLSEIFRRRIKIQGFIFWDDNIYTDNIENFKATMPKWVSEGKIKSRYTQFEGIEQADKAFLSMFTGGSHGKTVLKISDP.

A compositionally biased stretch (polar residues) spans 1–17 (MGGEVSNKTWVFKQSPS). A disordered region spans residues 1–22 (MGGEVSNKTWVFKQSPSGLPEP).

The protein belongs to the zinc-containing alcohol dehydrogenase family. Quinone oxidoreductase subfamily.

It functions in the pathway mycotoxin biosynthesis. In terms of biological role, dehydrogenase; part of the gene cluster that mediates the biosynthesis of fusaric acid, a mycotoxin with low to moderate toxicity to animals and humans, but with high phytotoxic properties. L-aspartate is suggested as fusaric acid amino acid precursor that is activated and further processed to O-acetyl-L-homoserine by cluster enzymes aspartate kinase FUB3 and homoserine O-acetyltransferase FUB5, as well as enzymes of the primary metabolism. The polyketide synthase (PKS) FUB1 generates the triketide trans-2-hexenal which is presumptively released by the hydrolase FUB4 and linked to the NRPS-bound amino acid precursor by NAD(P)-dependent dehydrogenase FUB6. FUB1, FUB4, and the non-canonical NRPS Fub8 may form an enzyme complex. Further processing of the NRPS-bound intermediate might be carried out by FUB6 and the O-acetylhomoserine FUB7, enabling a spontaneous electrocyclization to close the carbon backbone of fusaric acid. Dihydrofusaric acid is likely to be released via reduction by the thioester reductase (TR) domain of FUB8 whereupon the final oxidation to fusaric acid may (also) be performed by the FMN-dependent dehydrogenase FUB9. The chain is Dehydrogenase FUB6 from Fusarium oxysporum f. sp. lycopersici (strain 4287 / CBS 123668 / FGSC 9935 / NRRL 34936) (Fusarium vascular wilt of tomato).